Here is a 326-residue protein sequence, read N- to C-terminus: Cytosolic Fe-S cluster assembly factor NBP35 (326 aa).

The disordered stretch occupies residues 1–38; the sequence is MTEIANGQQILPPDYTLKEPEPEHCPGPESENAGKGDS. Residues 16 to 26 show a composition bias toward basic and acidic residues; that stretch reads TLKEPEPEHCP. Residues Cys-25, Cys-39, Cys-42, and Cys-48 each coordinate [4Fe-4S] cluster. 78-85 contributes to the ATP binding site; that stretch reads GKGGVGKS. Positions 251 and 254 each coordinate [4Fe-4S] cluster.

This sequence belongs to the Mrp/NBP35 ATP-binding proteins family. NUBP1/NBP35 subfamily. In terms of assembly, heterotetramer of 2 NBP35 and 2 CFD1 chains. The cofactor is [4Fe-4S] cluster.

The protein localises to the cytoplasm. The protein resides in the nucleus. In terms of biological role, component of the cytosolic iron-sulfur (Fe/S) protein assembly (CIA) machinery. Required for maturation of extramitochondrial Fe-S proteins. The NBP35-CFD1 heterotetramer forms a Fe-S scaffold complex, mediating the de novo assembly of an Fe-S cluster and its transfer to target apoproteins. Required for biogenesis and export of both ribosomal subunits, which may reflect a role in assembly of the Fe/S clusters in RLI1, a protein which performs rRNA processing and ribosome export. This is Cytosolic Fe-S cluster assembly factor NBP35 from Kluyveromyces lactis (strain ATCC 8585 / CBS 2359 / DSM 70799 / NBRC 1267 / NRRL Y-1140 / WM37) (Yeast).